Consider the following 567-residue polypeptide: Probable E3 ubiquitin-protein ligase ARI8 (567 aa).

The disordered stretch occupies residues 1-27 (MEADDDFYSGTENYSDYADSDEDDADG). The segment covering 18-27 (ADSDEDDADG) has biased composition (acidic residues). The segment at 124 to 337 (GELDCGICFE…GGFYACNRYE (214 aa)) is TRIAD supradomain. Zn(2+)-binding residues include cysteine 128, cysteine 131, cysteine 145, histidine 147, cysteine 150, cysteine 153, cysteine 173, cysteine 178, cysteine 217, cysteine 222, cysteine 239, cysteine 241, cysteine 246, cysteine 249, histidine 254, cysteine 259, cysteine 286, and cysteine 289. The RING-type 1 zinc-finger motif lies at 128-178 (CGICFETFLSDKLHAAACGHPFCDSCWEGYITTAINDGPGCLTLRCPDPSC). Residues 197-259 (QKYTSYFVRS…AEEAHRPVDC (63 aa)) form an IBR-type zinc finger. The RING-type 2; atypical zinc finger occupies 286 to 316 (CPKCKRPIEKNQGCMHITCTPPCKFEFCWLC). The active site involves cysteine 299. Zn(2+) is bound by residues cysteine 304, cysteine 308, cysteine 313, cysteine 316, histidine 323, and cysteine 333. The disordered stretch occupies residues 514 to 543 (DAYDRTSSSKSLGGKTKGSSSKASSSDSSH). Residues 521–542 (SSKSLGGKTKGSSSKASSSDSS) are compositionally biased toward low complexity. A RanBP2-type zinc finger spans residues 540 to 567 (DSSHWPCEYCTYVNPRSTTICQMCEHGR).

It belongs to the RBR family. Ariadne subfamily. The cofactor is Zn(2+). In terms of tissue distribution, ubiquitous.

It catalyses the reaction [E2 ubiquitin-conjugating enzyme]-S-ubiquitinyl-L-cysteine + [acceptor protein]-L-lysine = [E2 ubiquitin-conjugating enzyme]-L-cysteine + [acceptor protein]-N(6)-ubiquitinyl-L-lysine.. It participates in protein modification; protein ubiquitination. Might act as an E3 ubiquitin-protein ligase, or as part of E3 complex, which accepts ubiquitin from specific E2 ubiquitin-conjugating enzymes and then transfers it to substrates. This Arabidopsis thaliana (Mouse-ear cress) protein is Probable E3 ubiquitin-protein ligase ARI8 (ARI8).